The primary structure comprises 396 residues: Cytochrome b (396 aa).

Helical transmembrane passes span 37-57 (FGSL…ILAM), 81-102 (WLMR…YAHI), 117-137 (WNVG…GYVL), and 182-202 (FFTF…IHIM). The heme b site is built by histidine 87 and histidine 101. The heme b site is built by histidine 186 and histidine 200. Histidine 205 contacts a ubiquinone. 4 consecutive transmembrane segments (helical) span residues 230–250 (FKDI…SLLP), 292–312 (LGGV…PFTH), 324–344 (LAQV…WLGG), and 351–371 (FILM…LIFP).

Belongs to the cytochrome b family. In terms of assembly, the cytochrome bc1 complex contains 3 respiratory subunits (MT-CYB, CYC1 and UQCRFS1), 2 core proteins (UQCRC1 and UQCRC2) and probably 6 low-molecular weight proteins. The cofactor is heme b.

It is found in the mitochondrion inner membrane. Functionally, component of the ubiquinol-cytochrome c reductase complex (complex III or cytochrome b-c1 complex) that is part of the mitochondrial respiratory chain. The b-c1 complex mediates electron transfer from ubiquinol to cytochrome c. Contributes to the generation of a proton gradient across the mitochondrial membrane that is then used for ATP synthesis. The sequence is that of Cytochrome b (mt-cyb) from Lampetra fluviatilis (European river lamprey).